The following is a 290-amino-acid chain: UPF0761 membrane protein Ent638_4092 (290 aa).

6 consecutive transmembrane segments (helical) span residues 44-64, 104-124, 140-160, 183-203, 210-230, and 244-264; these read LLSL…FPMF, VGAC…DSAL, FAVY…SLAI, IFPL…VPTL, AIVG…GFAL, and VLAV…IVLL.

Belongs to the UPF0761 family.

It is found in the cell inner membrane. The protein is UPF0761 membrane protein Ent638_4092 of Enterobacter sp. (strain 638).